We begin with the raw amino-acid sequence, 291 residues long: 4-hydroxy-tetrahydrodipicolinate synthase (291 aa).

Thr45 contributes to the pyruvate binding site. Tyr133 functions as the Proton donor/acceptor in the catalytic mechanism. Lys161 serves as the catalytic Schiff-base intermediate with substrate. Ile203 contributes to the pyruvate binding site.

The protein belongs to the DapA family. In terms of assembly, homotetramer; dimer of dimers.

It is found in the cytoplasm. The catalysed reaction is L-aspartate 4-semialdehyde + pyruvate = (2S,4S)-4-hydroxy-2,3,4,5-tetrahydrodipicolinate + H2O + H(+). The protein operates within amino-acid biosynthesis; L-lysine biosynthesis via DAP pathway; (S)-tetrahydrodipicolinate from L-aspartate: step 3/4. In terms of biological role, catalyzes the condensation of (S)-aspartate-beta-semialdehyde [(S)-ASA] and pyruvate to 4-hydroxy-tetrahydrodipicolinate (HTPA). This chain is 4-hydroxy-tetrahydrodipicolinate synthase, found in Teredinibacter turnerae (strain ATCC 39867 / T7901).